The chain runs to 408 residues: Peptidase T (408 aa).

H78 lines the Zn(2+) pocket. D80 is a catalytic residue. Position 140 (D140) interacts with Zn(2+). Residue E174 is the Proton acceptor of the active site. 3 residues coordinate Zn(2+): E175, D197, and H379.

This sequence belongs to the peptidase M20B family. The cofactor is Zn(2+).

It localises to the cytoplasm. It catalyses the reaction Release of the N-terminal residue from a tripeptide.. In terms of biological role, cleaves the N-terminal amino acid of tripeptides. The polypeptide is Peptidase T (Staphylococcus aureus (strain bovine RF122 / ET3-1)).